The primary structure comprises 172 residues: Resuscitation-promoting factor RpfE (172 aa).

A signal peptide spans 1–28 (MKNARTTLIAAAIAGTLVTTSPAGIANA). Positions 33–89 (LDPNAAAGPDAVGFDPNLPPAPDAAPVDTPPAPEDAGFDPNLPPPLAPDFLSPPAEE) are disordered. Pro residues predominate over residues 49 to 65 (NLPPAPDAAPVDTPPAP).

It belongs to the transglycosylase family. Rpf subfamily. As to quaternary structure, interacts with RipA.

In terms of biological role, factor that stimulates resuscitation of dormant cells. Has peptidoglycan (PG) hydrolytic activity. Active in the pM concentration range. Has little to no effect on actively-growing cells. PG fragments could either directly activate the resuscitation pathway of dormant bacteria or serve as a substrate for endogenous Rpf, resulting in low molecular weight products with resuscitation activity. Its function is as follows. Stimulates growth of stationary phase M.bovis (a slow-growing Mycobacterium), reduces the lag phase of diluted fast-growers M.smegmatis and Micrococcus luteus. Sequential gene disruption indicates RpfB and RpfE are higher than RpfD and RpfC in functional hierarchy. The sequence is that of Resuscitation-promoting factor RpfE (rpfE) from Mycobacterium tuberculosis (strain ATCC 25618 / H37Rv).